The following is a 237-amino-acid chain: BTB/POZ domain-containing protein KCTD6 (237 aa).

Positions 12–81 (HPVTLNVGGH…LRTSELTLPV (70 aa)) constitute a BTB domain.

Homopentamer. May be part of a cullin-containing E3 ubiquitin-protein ligase complex.

It functions in the pathway protein modification; protein ubiquitination. Probable substrate-specific adapter of a cullin-containing E3 ubiquitin-protein ligase complex mediating the ubiquitination and subsequent proteasomal degradation of target proteins. This chain is BTB/POZ domain-containing protein KCTD6 (kctd6), found in Danio rerio (Zebrafish).